The sequence spans 417 residues: Gamma-glutamyl phosphate reductase (417 aa).

Belongs to the gamma-glutamyl phosphate reductase family.

It is found in the cytoplasm. The catalysed reaction is L-glutamate 5-semialdehyde + phosphate + NADP(+) = L-glutamyl 5-phosphate + NADPH + H(+). Its pathway is amino-acid biosynthesis; L-proline biosynthesis; L-glutamate 5-semialdehyde from L-glutamate: step 2/2. Catalyzes the NADPH-dependent reduction of L-glutamate 5-phosphate into L-glutamate 5-semialdehyde and phosphate. The product spontaneously undergoes cyclization to form 1-pyrroline-5-carboxylate. The protein is Gamma-glutamyl phosphate reductase of Streptococcus agalactiae serotype III (strain NEM316).